We begin with the raw amino-acid sequence, 158 residues long: Transcription elongation factor GreA (158 aa).

This sequence belongs to the GreA/GreB family.

Necessary for efficient RNA polymerase transcription elongation past template-encoded arresting sites. The arresting sites in DNA have the property of trapping a certain fraction of elongating RNA polymerases that pass through, resulting in locked ternary complexes. Cleavage of the nascent transcript by cleavage factors such as GreA or GreB allows the resumption of elongation from the new 3'terminus. GreA releases sequences of 2 to 3 nucleotides. In Rhizobium leguminosarum bv. trifolii (strain WSM2304), this protein is Transcription elongation factor GreA.